The primary structure comprises 376 residues: Queuine tRNA-ribosyltransferase (376 aa).

Aspartate 93 (proton acceptor) is an active-site residue. Substrate-binding positions include 93-97 (DSGGF), aspartate 147, glutamine 190, and glycine 217. The segment at 248–254 (GVGKPDD) is RNA binding. Aspartate 267 (nucleophile) is an active-site residue. 4 residues coordinate Zn(2+): cysteine 305, cysteine 307, cysteine 310, and histidine 336.

Belongs to the queuine tRNA-ribosyltransferase family. Homodimer. Within each dimer, one monomer is responsible for RNA recognition and catalysis, while the other monomer binds to the replacement base PreQ1. Zn(2+) is required as a cofactor.

The catalysed reaction is 7-aminomethyl-7-carbaguanine + guanosine(34) in tRNA = 7-aminomethyl-7-carbaguanosine(34) in tRNA + guanine. It participates in tRNA modification; tRNA-queuosine biosynthesis. In terms of biological role, catalyzes the base-exchange of a guanine (G) residue with the queuine precursor 7-aminomethyl-7-deazaguanine (PreQ1) at position 34 (anticodon wobble position) in tRNAs with GU(N) anticodons (tRNA-Asp, -Asn, -His and -Tyr). Catalysis occurs through a double-displacement mechanism. The nucleophile active site attacks the C1' of nucleotide 34 to detach the guanine base from the RNA, forming a covalent enzyme-RNA intermediate. The proton acceptor active site deprotonates the incoming PreQ1, allowing a nucleophilic attack on the C1' of the ribose to form the product. After dissociation, two additional enzymatic reactions on the tRNA convert PreQ1 to queuine (Q), resulting in the hypermodified nucleoside queuosine (7-(((4,5-cis-dihydroxy-2-cyclopenten-1-yl)amino)methyl)-7-deazaguanosine). The sequence is that of Queuine tRNA-ribosyltransferase from Jannaschia sp. (strain CCS1).